Here is a 455-residue protein sequence, read N- to C-terminus: ATP-dependent protease ATPase subunit HslU (455 aa).

ATP contacts are provided by residues isoleucine 19 and 61 to 66 (GVGKTE). Residues 144–163 (ESKVGFANEPAEDAASKKEK) form a disordered region. Aspartate 268, glutamate 333, and arginine 405 together coordinate ATP.

The protein belongs to the ClpX chaperone family. HslU subfamily. A double ring-shaped homohexamer of HslV is capped on each side by a ring-shaped HslU homohexamer. The assembly of the HslU/HslV complex is dependent on binding of ATP.

The protein resides in the cytoplasm. ATPase subunit of a proteasome-like degradation complex; this subunit has chaperone activity. The binding of ATP and its subsequent hydrolysis by HslU are essential for unfolding of protein substrates subsequently hydrolyzed by HslV. HslU recognizes the N-terminal part of its protein substrates and unfolds these before they are guided to HslV for hydrolysis. The sequence is that of ATP-dependent protease ATPase subunit HslU from Francisella tularensis subsp. novicida (strain U112).